We begin with the raw amino-acid sequence, 663 residues long: Innate immunity activator protein (663 aa).

A disordered region spans residues 1-68; that stretch reads MLQMPKLNEI…RLPTQPGPGW (68 aa). The span at 40-50 shows a compositional bias: low complexity; it reads RAQGQAGGARA. A coiled-coil region spans residues 118-147; sequence AVHKQQRALEARLEACLEELRRLCLREAEL. A Nuclear localization signal (NLS) 1 motif is present at residues 164-170; the sequence is PKVRRRI. Disordered stretches follow at residues 242–362, 378–425, and 444–493; these read RRRN…ASSL, VPGQ…PRRR, and PLPH…RHRG. Low complexity predominate over residues 259-272; that stretch reads ELSASDDSSLSDGL. Pro residues predominate over residues 282 to 298; that stretch reads PKPPPESPAPPSRPLPP. Residues 327–340 show a composition bias toward basic and acidic residues; the sequence is TSLDHPYEKPRKSS. The Nuclear localization signal (NLS) 2 motif lies at 332–338; it reads PYEKPRK. Polar residues predominate over residues 350-361; it reads ATTPQDGPSASS. A Nuclear localization signal (NLS) 3 motif is present at residues 422–428; that stretch reads PRRRPTH. The span at 455–475 shows a compositional bias: low complexity; sequence EDSGSDVSSISHPTSPGSSSP.

As to quaternary structure, interacts with IRAK1, NOD2 and RIPK2; the interaction takes place upon PRR stimulation. Interacts with YWHAQ/14-3-3T; the interaction increases upon PRR stimulation and is required for cellular signaling pathway activation and cytokine secretion. Interacts (via N-terminal domain) with CYTH1 and CYTH2 (via their N-terminal domains). Interacts with FBXW11 and BTRC; associates with SCF E3 ubiquitin-protein ligase complexes. In terms of tissue distribution, highly expressed in intestinal myeloid-derived cells and expressed in monocyte-derived macrophages upon induction by PRR activation.

The protein resides in the nucleus. It is found in the cytoplasm. Functionally, expressed in peripheral macrophages and intestinal myeloid-derived cells, is required for optimal PRR (pattern recognition receptor)-induced signaling, cytokine secretion, and bacterial clearance. Upon stimulation of a broad range of PRRs (pattern recognition receptor) such as NOD2 or TLR2, TLR3, TLR4, TLR5, TLR7 and TLR9, associates with YWHAQ/14-3-3T, which in turn leads to the recruitment and activation of MAP kinases and NF-kappa-B signaling complexes that amplifies PRR-induced downstream signals and cytokine secretion. In the intestine, regulates adherens junction stability by regulating the degradation of CYTH1 and CYTH2, probably acting as substrate cofactor for SCF E3 ubiquitin-protein ligase complexes. Stabilizes adherens junctions by limiting CYTH1-dependent ARF6 activation. This is Innate immunity activator protein from Homo sapiens (Human).